Consider the following 302-residue polypeptide: Rab effector Noc2 (302 aa).

Positions 41 to 158 (QRRTQCLSPG…KRSGAWFYKG (118 aa)) constitute a RabBD domain. Residues 89 to 146 (GNGVSQCLLCGEMLGFLGSSSVFCKDCRKKVCTKCGIEASPGQKRPLWLCKICSEQRE) form an FYVE-type zinc finger. Zn(2+)-binding residues include cysteine 95, cysteine 98, cysteine 112, cysteine 115, cysteine 120, cysteine 123, cysteine 138, and cysteine 141. Disordered stretches follow at residues 174 to 194 (DPHF…SAEV) and 206 to 302 (VSSD…TTHY). Serine 248 carries the phosphoserine modification. The span at 258–269 (SHLSGSQSSLGS) shows a compositional bias: low complexity.

In terms of assembly, recruited to dense-core vesicles through specific interaction with RAB27A in endocrine cells. Interacts with RAB3A, RAB3B, RAB3C and RAB3D. Interacts with ZYX. In terms of tissue distribution, highly expressed in pancreatic islets and parotid. High to moderate expression in adrenal gland, pituitary gland and ovary.

It localises to the cytoplasm. Its subcellular location is the cytoplasmic vesicle. The protein resides in the secretory vesicle membrane. Rab GTPase effector involved in the late steps of regulated exocytosis, both in endocrine and exocrine cells. Regulates the exocytosis of dense-core vesicles in neuroendocrine cells through interaction with RAB27A. Acts as a potential RAB3B effector protein in epithelial cells. This Rattus norvegicus (Rat) protein is Rab effector Noc2 (Rph3al).